We begin with the raw amino-acid sequence, 122 residues long: Large ribosomal subunit protein bL12 (122 aa).

The protein belongs to the bacterial ribosomal protein bL12 family. In terms of assembly, homodimer. Part of the ribosomal stalk of the 50S ribosomal subunit. Forms a multimeric L10(L12)X complex, where L10 forms an elongated spine to which 2 to 4 L12 dimers bind in a sequential fashion. Binds GTP-bound translation factors.

In terms of biological role, forms part of the ribosomal stalk which helps the ribosome interact with GTP-bound translation factors. Is thus essential for accurate translation. The sequence is that of Large ribosomal subunit protein bL12 from Enterococcus faecalis (strain ATCC 700802 / V583).